The sequence spans 784 residues: Spindle pole body component alp4 (784 aa).

It belongs to the TUBGCP family. Part of the gamma-tubulin complex. Interacts with mcp6. Interacts with mto1. Interacts with mto2.

It is found in the cytoplasm. Its subcellular location is the cytoskeleton. The protein resides in the microtubule organizing center. It localises to the spindle pole body. Its function is as follows. Component of the gamma tubule complex that is required for the regulation of both interphase microtubules and mitotic bipolar spindles. This is Spindle pole body component alp4 (alp4) from Schizosaccharomyces pombe (strain 972 / ATCC 24843) (Fission yeast).